Reading from the N-terminus, the 208-residue chain is Thymidylate kinase (208 aa).

ATP is bound at residue 10–17 (GPEGSGKT).

This sequence belongs to the thymidylate kinase family.

The enzyme catalyses dTMP + ATP = dTDP + ADP. Phosphorylation of dTMP to form dTDP in both de novo and salvage pathways of dTTP synthesis. The sequence is that of Thymidylate kinase from Bacillus cereus (strain AH187).